The following is a 348-amino-acid chain: Heat-inducible transcription repressor HrcA (348 aa).

The protein belongs to the HrcA family.

Its function is as follows. Negative regulator of class I heat shock genes (grpE-dnaK-dnaJ and groELS operons). Prevents heat-shock induction of these operons. In Ruminiclostridium cellulolyticum (strain ATCC 35319 / DSM 5812 / JCM 6584 / H10) (Clostridium cellulolyticum), this protein is Heat-inducible transcription repressor HrcA.